Here is a 413-residue protein sequence, read N- to C-terminus: Palmitoyltransferase ZDHHC6 (413 aa).

Residues 1–24 (MGTFCSVVKFENLQELKRLCHWGP) lie on the Cytoplasmic side of the membrane. Residues 25–45 (IIALGVIAICSAMAMIDSVLW) traverse the membrane as a helical segment. Residues 46 to 57 (YWPLHTTGGSVN) are Lumenal-facing. A helical membrane pass occupies residues 58–78 (FIMLINWTVMILYNYFNAMFV). Over 79 to 143 (GPGFVPLGWK…NCCGYQNHAS (65 aa)) the chain is Cytoplasmic. Residues 99 to 149 (QYCKVCQAYKAPRSHHCRKCNRCVMKMDHHCPWINNCCGYQNHASFTLFLL) form the DHHC domain. Cys129 acts as the S-palmitoyl cysteine intermediate in catalysis. The chain crosses the membrane as a helical span at residues 144–164 (FTLFLLLAPLGCIHAAFIFVM). Residues 165–194 (TMYTQLYNRLSFGWNTVKIDMSAARRDPLP) are Lumenal-facing. The helical transmembrane segment at 195–215 (IIPFGLAAFAATLFALGLALG) threads the bilayer. Residues 216–413 (TTIAVGMLFF…QAPEGEKKNR (198 aa)) are Cytoplasmic-facing. Residues 313–398 (VRSVRYKVIE…PRNCVEKCPC (86 aa)) enclose the SH3 domain. Residues Cys328, Cys329, and Cys343 are each lipidated (S-palmitoyl cysteine). The Di-lysine motif motif lies at 410–413 (KKNR).

It belongs to the DHHC palmitoyltransferase family. In terms of assembly, homooligomerizes. Interacts with SELENOK. Palmitoylated at 3 different sites by ZDHHC16. The combination of the different palmitoylation events strongly affects the quaternary assembly of ZDHHC6, its localization, stability and function. Palmitoylation at Cys-328 accelerates the turnover of ZDHHC6. Depalmitoylated by LYPLA2.

It is found in the endoplasmic reticulum membrane. It catalyses the reaction L-cysteinyl-[protein] + hexadecanoyl-CoA = S-hexadecanoyl-L-cysteinyl-[protein] + CoA. The catalysed reaction is L-cysteinyl-[protein] + octadecanoyl-CoA = S-octadecanoyl-L-cysteinyl-[protein] + CoA. Functionally, endoplasmic reticulum palmitoyl acyltransferase that mediates palmitoylation of proteins such as AMFR, CALX, ITPR1 and TFRC. Palmitoylates calnexin (CALX), which is required for its association with the ribosome-translocon complex and efficient folding of glycosylated proteins. Mediates palmitoylation of AMFR, promoting AMFR distribution to the peripheral endoplasmic reticulum. Together with SELENOK, palmitoylates ITPR1 in immune cells, leading to regulate ITPR1 stability and function. Stearoyltransferase that mediates stearoylation of TFRC to inhibit TFRC-mediated activation of the JNK pathway and mitochondrial fragmentation. The sequence is that of Palmitoyltransferase ZDHHC6 from Bos taurus (Bovine).